The following is a 1263-amino-acid chain: TBC1 domain family member 9B (1263 aa).

GRAM domains follow at residues 142-209 and 288-356; these read LKMR…EKNA and ECYR…EKAD. Residue threonine 397 is modified to Phosphothreonine. The disordered stretch occupies residues 397–449; the sequence is TPSKQTGSSIGGTKASVSDPAPESLPTPQEASEPPASPSSPLSSPPSFSTQEI. Phosphoserine is present on residues serine 412, serine 433, serine 436, and serine 464. Positions 422-447 are enriched in low complexity; sequence PTPQEASEPPASPSSPLSSPPSFSTQ. The Rab-GAP TBC domain maps to 509–696; it reads GIPESLRGEL…VIVDCFFYEG (188 aa). A helical transmembrane segment spans residues 669–689; it reads LSWFLTLFLSVMPFESAVVIV. An EF-hand domain is found at 880–915; sequence HTPVLAGRMFRLLDQNKDSLINFKEFVTGMSGMYHG. 3 disordered regions span residues 977–1002, 1075–1126, and 1139–1159; these read EQQE…PDYR, TTKK…SGDM, and VEGG…DDET. Residues 987 to 1002 show a composition bias toward basic and acidic residues; sequence TPERREEKGTSPPDYR. Position 1254 is a phosphoserine (serine 1254).

The protein localises to the membrane. Functionally, may act as a GTPase-activating protein for Rab family protein(s). This is TBC1 domain family member 9B (Tbc1d9b) from Mus musculus (Mouse).